A 504-amino-acid polypeptide reads, in one-letter code: MQQSTPYLSFRGIGKTFPGVKALTDISFDCYAGQVHALMGENGAGKSTLLKILSGNYAPTTGSVVINGQEMSFSDTTAALNAGVAIIYQELHLVPEMTVAENIYLGQLPHKGGIVNRSLLNYEAGLQLKHLGMDIDPDTPLKYLSIGQWQMVEIAKALARNAKIIAFDEPTSSLSAREIDNLFRVIRELRKEGRVILYVSHRMEEIFALSDAITVFKDGRYVKTFTDMQQVDHDALVQAMVGRDIGDIYGWQPRSYGEERLRLDAVKAPGVRTPISLAVRSGEIVGLFGLVGAGRSELMKGLFGGTQITAGQVYIDQQPIDIRKPSHAIAAGMMLCPEDRKAEGIIPVHSVRDNINISARRKHVLGGCVINNGWEENNADQHIRSLNIKTPGAEQLIMNLSGGNQQKAILGRWLSEEMKVILLDEPTRSIDVGAKHEIYNVIYALAAQGVAVLFASSDLPEVLGVADRIVVMREGEIAGELLHEQADERQALSLAMPKVSQAVA.

ABC transporter domains lie at 8–243 and 256–499; these read LSFR…MVGR and YGEE…MPKV. 40–47 contributes to the ATP binding site; the sequence is GENGAGKS.

This sequence belongs to the ABC transporter superfamily. Arabinose importer (TC 3.A.1.2.2) family. In terms of assembly, the complex is composed of two ATP-binding proteins (AraG), two transmembrane proteins (AraH) and a solute-binding protein (AraF).

The protein resides in the cell inner membrane. It carries out the reaction L-arabinose(out) + ATP + H2O = L-arabinose(in) + ADP + phosphate + H(+). Functionally, part of the ABC transporter complex AraFGH involved in arabinose import. Responsible for energy coupling to the transport system. This chain is Arabinose import ATP-binding protein AraG, found in Shigella sonnei (strain Ss046).